We begin with the raw amino-acid sequence, 898 residues long: Putative aconitate hydratase, cytoplasmic (898 aa).

Residues Q90 and 209-211 (DSH) each bind substrate. 3 residues coordinate [4Fe-4S] cluster: C441, C507, and C510. Residues R540, R545, R703, and 784 to 785 (SR) contribute to the substrate site.

It belongs to the aconitase/IPM isomerase family. The cofactor is [4Fe-4S] cluster.

It is found in the cytoplasm. It catalyses the reaction citrate = D-threo-isocitrate. Its pathway is carbohydrate metabolism; glyoxylate and dicarboxylate metabolism. Functionally, catalyzes the isomerization of citrate to isocitrate via cis-aconitate. The polypeptide is Putative aconitate hydratase, cytoplasmic (Oryza sativa subsp. japonica (Rice)).